The following is a 142-amino-acid chain: Alpha-lactalbumin (142 aa).

Residues methionine 1 to alanine 19 form the signal peptide. The region spanning glutamate 20 to leucine 142 is the C-type lysozyme domain. 4 cysteine pairs are disulfide-bonded: cysteine 25-cysteine 139, cysteine 47-cysteine 130, cysteine 80-cysteine 96, and cysteine 92-cysteine 110. An N-linked (GlcNAc...) asparagine glycan is attached at asparagine 64. Residues lysine 98, aspartate 101, aspartate 103, aspartate 106, and aspartate 107 each coordinate Ca(2+).

The protein belongs to the glycosyl hydrolase 22 family. In terms of assembly, lactose synthase (LS) is a heterodimer of a catalytic component, beta1,4-galactosyltransferase (beta4Gal-T1) and a regulatory component, alpha-lactalbumin (LA). As to expression, mammary gland specific. Secreted in milk.

The protein localises to the secreted. Regulatory subunit of lactose synthase, changes the substrate specificity of galactosyltransferase in the mammary gland making glucose a good acceptor substrate for this enzyme. This enables LS to synthesize lactose, the major carbohydrate component of milk. In other tissues, galactosyltransferase transfers galactose onto the N-acetylglucosamine of the oligosaccharide chains in glycoproteins. The sequence is that of Alpha-lactalbumin (LALBA) from Bos taurus (Bovine).